The sequence spans 223 residues: Cytochrome c biogenesis ATP-binding export protein CcmA (223 aa).

One can recognise an ABC transporter domain in the interval 1 to 223; it reads MRSLACERDE…KSDMAVGNDY (223 aa). 31 to 38 is a binding site for ATP; sequence GSNGAGKT.

This sequence belongs to the ABC transporter superfamily. CcmA exporter (TC 3.A.1.107) family. In terms of assembly, the complex is composed of two ATP-binding proteins (CcmA) and two transmembrane proteins (CcmB).

It localises to the cell inner membrane. The catalysed reaction is heme b(in) + ATP + H2O = heme b(out) + ADP + phosphate + H(+). Its function is as follows. Part of the ABC transporter complex CcmAB involved in the biogenesis of c-type cytochromes; once thought to export heme, this seems not to be the case, but its exact role is uncertain. Responsible for energy coupling to the transport system. This Saccharophagus degradans (strain 2-40 / ATCC 43961 / DSM 17024) protein is Cytochrome c biogenesis ATP-binding export protein CcmA.